The sequence spans 168 residues: Signal peptidase I V (168 aa).

The Cytoplasmic portion of the chain corresponds to 1–6 (MKKRFW). A helical transmembrane segment spans residues 7–26 (FLAGVVSVVLAIQVKNAVFI). Residues 27 to 168 (DYKVEGVSMN…NIVGVISDAE (142 aa)) are Extracellular-facing. Active-site residues include S34 and K75.

It belongs to the peptidase S26 family.

The protein localises to the cell membrane. The enzyme catalyses Cleavage of hydrophobic, N-terminal signal or leader sequences from secreted and periplasmic proteins.. This is Signal peptidase I V (sipV) from Bacillus subtilis (strain 168).